The following is a 351-amino-acid chain: Alternative oxidase, mitochondrial (351 aa).

The chain crosses the membrane as a helical span at residues 147 to 167; the sequence is LTRFIFLESVAGVPGMVGGML. Residues E154, E193, and H196 each coordinate Fe cation. Residues 212–232 form a helical membrane-spanning segment; the sequence is LMVLGAQGVFFNGFFLSYLMS. The Fe cation site is built by E244, E245, E299, and H302. Positions 322-351 are disordered; sequence AAKYKDPTKAHPNKGIADLKPTGWEREEVI.

This sequence belongs to the alternative oxidase family. Fe cation serves as cofactor.

The protein resides in the mitochondrion inner membrane. Catalyzes cyanide-resistant oxygen consumption. May increase respiration when the cytochrome respiratory pathway is restricted, or in response to low temperatures. The polypeptide is Alternative oxidase, mitochondrial (aox1) (Aspergillus niger).